The sequence spans 348 residues: Guanosine ABC transporter permease protein NupP (348 aa).

Transmembrane regions (helical) follow at residues 8–28 (LLVP…IMLV), 61–81 (YILS…NIGV), 85–105 (LLVG…PAYI), 107–127 (LPLA…IPGI), 136–156 (EVIV…YIIS), 189–209 (LHLG…IINK), 237–257 (IMTS…MEGL), 277–297 (IAVA…ACLL), and 320–340 (IVIA…FVMG).

The protein belongs to the binding-protein-dependent transport system permease family. In terms of assembly, the complex is composed of two ATP-binding proteins (NupO), two transmembrane proteins (NupP and NupQ) and a solute-binding protein (NupN).

It is found in the cell membrane. Part of an ABC transporter complex involved in the uptake of guanosine. Responsible for the translocation of the substrate across the membrane. May be a nucleoside transporter of broad specificity but with various affinities for different substrates. The polypeptide is Guanosine ABC transporter permease protein NupP (Bacillus subtilis (strain 168)).